Here is a 525-residue protein sequence, read N- to C-terminus: Probable lipid II flippase MurJ (525 aa).

14 helical membrane-spanning segments follow: residues 10–30 (LLKSGIIVSAMTLISRVLGLV), 32–52 (DVVVANLMGAGASADVFFFAN), 100–120 (VLVTIVTLIGVLGSGAVTALF), 140–160 (LASLLLKITFPYLWFITFVAL), 171–191 (FAVSSFTPVFLNVMMILCAWY), 203–223 (LAIGVFLGGLVQFLFQLPFLI), 247–267 (MIPALFGVSVSQINLLFDSFV), 285–305 (LLEFPLGLFGIAIATVILPAL), 330–350 (FLGIPAMLGLMVLAKPMLMVL), 368–388 (LLAYSSGLLSFMLIKVLAPGY), 402–422 (IIAMVSNIVLNAIFAWFYGYV), 423–443 (GLAVATSMSAFLNMALLYRGL), 455–475 (TVWFVARLAMAGAVMTGALLW), and 495–515 (LTGLIGLGVASYLAILLLLGV).

It belongs to the MurJ/MviN family.

The protein resides in the cell inner membrane. The protein operates within cell wall biogenesis; peptidoglycan biosynthesis. Its function is as follows. Involved in peptidoglycan biosynthesis. Transports lipid-linked peptidoglycan precursors from the inner to the outer leaflet of the cytoplasmic membrane. This Vibrio cholerae serotype O1 (strain ATCC 39315 / El Tor Inaba N16961) protein is Probable lipid II flippase MurJ.